A 170-amino-acid chain; its full sequence is Shikimate kinase (170 aa).

L11–T16 contacts ATP. S15 provides a ligand contact to Mg(2+). 3 residues coordinate substrate: D33, R57, and G79. R119 contributes to the ATP binding site. R137 contributes to the substrate binding site.

This sequence belongs to the shikimate kinase family. As to quaternary structure, monomer. It depends on Mg(2+) as a cofactor.

The protein localises to the cytoplasm. The catalysed reaction is shikimate + ATP = 3-phosphoshikimate + ADP + H(+). The protein operates within metabolic intermediate biosynthesis; chorismate biosynthesis; chorismate from D-erythrose 4-phosphate and phosphoenolpyruvate: step 5/7. In terms of biological role, catalyzes the specific phosphorylation of the 3-hydroxyl group of shikimic acid using ATP as a cosubstrate. This chain is Shikimate kinase, found in Clostridium botulinum (strain Kyoto / Type A2).